Here is a 307-residue protein sequence, read N- to C-terminus: Mitochondrial thiamine pyrophosphate carrier 1 (307 aa).

3 Solcar repeats span residues 13–95 (VSTT…IGSF), 105–190 (SPQL…IKIF), and 203–305 (PFTL…FMNK). Helical transmembrane passes span 19–36 (LVAG…IAPL), 76–96 (IMYI…GSFL), 108–126 (LYSC…LASY), 160–184 (MGFF…FGVY), 210–226 (LAGP…TFPL), and 280–297 (GVTM…ISLW).

Belongs to the mitochondrial carrier (TC 2.A.29) family.

It localises to the mitochondrion inner membrane. Its function is as follows. Mitochondrial transporter that mediates uptake of thiamine pyrophosphate (ThPP) into mitochondria. The chain is Mitochondrial thiamine pyrophosphate carrier 1 (TPC1) from Candida glabrata (strain ATCC 2001 / BCRC 20586 / JCM 3761 / NBRC 0622 / NRRL Y-65 / CBS 138) (Yeast).